A 237-amino-acid polypeptide reads, in one-letter code: Probable septum site-determining protein MinC (237 aa).

Belongs to the MinC family. Interacts with MinD and FtsZ.

Functionally, cell division inhibitor that blocks the formation of polar Z ring septums. Rapidly oscillates between the poles of the cell to destabilize FtsZ filaments that have formed before they mature into polar Z rings. Prevents FtsZ polymerization. This is Probable septum site-determining protein MinC from Neisseria gonorrhoeae.